A 79-amino-acid polypeptide reads, in one-letter code: Cell division protein ZapB (79 aa).

Residues 4–78 are a coiled coil; sequence EVFEKLESKV…LRALLGKMEE (75 aa).

Belongs to the ZapB family. As to quaternary structure, homodimer. The ends of the coiled-coil dimer bind to each other, forming polymers. Interacts with FtsZ.

Its subcellular location is the cytoplasm. In terms of biological role, non-essential, abundant cell division factor that is required for proper Z-ring formation. It is recruited early to the divisome by direct interaction with FtsZ, stimulating Z-ring assembly and thereby promoting cell division earlier in the cell cycle. Its recruitment to the Z-ring requires functional FtsA or ZipA. This chain is Cell division protein ZapB, found in Serratia proteamaculans (strain 568).